Here is a 318-residue protein sequence, read N- to C-terminus: Biotin synthase (318 aa).

One can recognise a Radical SAM core domain in the interval 46–272; it reads DGVDVEQLNN…RSVVKISGGR (227 aa). [4Fe-4S] cluster-binding residues include Cys61, Cys65, and Cys68. Cys105, Cys138, Cys197, and Lys267 together coordinate [2Fe-2S] cluster.

It belongs to the radical SAM superfamily. Biotin synthase family. In terms of assembly, homodimer. It depends on [4Fe-4S] cluster as a cofactor. The cofactor is [2Fe-2S] cluster.

It carries out the reaction (4R,5S)-dethiobiotin + (sulfur carrier)-SH + 2 reduced [2Fe-2S]-[ferredoxin] + 2 S-adenosyl-L-methionine = (sulfur carrier)-H + biotin + 2 5'-deoxyadenosine + 2 L-methionine + 2 oxidized [2Fe-2S]-[ferredoxin]. Its pathway is cofactor biosynthesis; biotin biosynthesis; biotin from 7,8-diaminononanoate: step 2/2. Its function is as follows. Catalyzes the conversion of dethiobiotin (DTB) to biotin by the insertion of a sulfur atom into dethiobiotin via a radical-based mechanism. This Cenarchaeum symbiosum (strain A) protein is Biotin synthase.